Reading from the N-terminus, the 433-residue chain is Xylose isomerase (433 aa).

Active-site residues include histidine 99 and aspartate 102. Residues glutamate 230, glutamate 266, histidine 269, aspartate 294, aspartate 305, aspartate 307, and aspartate 337 each contribute to the Mg(2+) site.

It belongs to the xylose isomerase family. As to quaternary structure, homotetramer. It depends on Mg(2+) as a cofactor.

The protein localises to the cytoplasm. The enzyme catalyses alpha-D-xylose = alpha-D-xylulofuranose. The chain is Xylose isomerase from Roseobacter denitrificans (strain ATCC 33942 / OCh 114) (Erythrobacter sp. (strain OCh 114)).